The following is a 520-amino-acid chain: Amine oxidase [flavin-containing] B (520 aa).

S2 carries the N-acetylserine modification. The Cytoplasmic portion of the chain corresponds to 2–489; it reads SSKCDVVVVG…TFLERHLPSV (488 aa). An N6-acetyllysine modification is found at K52. The residue at position 397 (C397) is an S-8alpha-FAD cysteine. A helical; Anchor for type IV membrane protein transmembrane segment spans residues 490–516; the sequence is PGLLRLIGLTAIFSATALGYLAHKRGL. Residues 517–520 lie on the Mitochondrial intermembrane side of the membrane; the sequence is LVRV.

This sequence belongs to the flavin monoamine oxidase family. Monomer, homo- or heterodimer (containing two subunits of similar size). Each subunit contains a covalently bound flavin. Enzymatically active as monomer. The cofactor is FAD.

It localises to the mitochondrion outer membrane. It catalyses the reaction a secondary aliphatic amine + O2 + H2O = a primary amine + an aldehyde + H2O2. The catalysed reaction is (R)-adrenaline + O2 + H2O = (R)-3,4-dihydroxymandelaldehyde + methylamine + H2O2. The enzyme catalyses a primary methyl amine + O2 + H2O = an aldehyde + H2O2 + NH4(+). It carries out the reaction benzylamine + O2 + H2O = benzaldehyde + H2O2 + NH4(+). It catalyses the reaction dopamine + O2 + H2O = 3,4-dihydroxyphenylacetaldehyde + H2O2 + NH4(+). The catalysed reaction is tyramine + O2 + H2O = (4-hydroxyphenyl)acetaldehyde + H2O2 + NH4(+). The enzyme catalyses (R)-noradrenaline + O2 + H2O = (R)-3,4-dihydroxymandelaldehyde + H2O2 + NH4(+). It carries out the reaction 2-phenylethylamine + O2 + H2O = 2-phenylacetaldehyde + H2O2 + NH4(+). It catalyses the reaction N-acetylputrescine + O2 + H2O = 4-acetamidobutanal + H2O2 + NH4(+). Catalyzes the oxidative deamination of primary and some secondary amines such as neurotransmitters, and exogenous amines including the tertiary amine, neurotoxin 1-methyl-4-phenyl-1,2,3,6-tetrahydropyridine (MPTP), with concomitant reduction of oxygen to hydrogen peroxide and participates in the metabolism of neuroactive and vasoactive amines in the central nervous system and peripheral tissues. Preferentially degrades benzylamine and phenylethylamine. This Sus scrofa (Pig) protein is Amine oxidase [flavin-containing] B.